Here is a 128-residue protein sequence, read N- to C-terminus: Fluoride-specific ion channel FluC (128 aa).

The next 4 membrane-spanning stretches (helical) occupy residues 4–24 (LLLVAAGGALGSVARYLVGVQ), 37–57 (TFIVNLTGGLLMGLLAAWLAL), 72–92 (VGVMGGFTTFSAFSLETALMI), and 101–121 (FTYTTASVILSVAAIFAGLLI). Na(+)-binding residues include Gly76 and Thr79.

It belongs to the fluoride channel Fluc/FEX (TC 1.A.43) family.

It localises to the cell inner membrane. It catalyses the reaction fluoride(in) = fluoride(out). Its activity is regulated as follows. Na(+) is not transported, but it plays an essential structural role and its presence is essential for fluoride channel function. Fluoride-specific ion channel. Important for reducing fluoride concentration in the cell, thus reducing its toxicity. This Caulobacter sp. (strain K31) protein is Fluoride-specific ion channel FluC.